A 725-amino-acid chain; its full sequence is MSKVCEFELNGKQEIFEFEKVAKQSNGAVLAKIGNAVVLATVVSEFDNPVSEDFTPLTVQYIEKTYAAAKLPGGFIKREGKPSDFETLTSRVIDRSLRPLFPKGYVYPTTITVMVLSADKNVDLQTLSLNAANAALYTSNLPIKKSVCGVRVGKIENTLVINPTNEQLENSTLDLYVAGSKEELLMIEMKTISSSELVEIDIEAFTKIHNTNEMDEDALVEAIAFAQNALKEANLTYEKAFEEVSKEKFEVELVKFTIEESVINYVRDNFSNDIKEAIKKLAKSERATQLKDVAKMISKNEYCISNEIEFNTIYEAVSVVKREIVRAMIVNERVRADGRGLKDVRPISIETNILPSTHSSCLFTRGETQALVIGTIAGPKDGQMYEVLTDKSTSMENFMVHYNFPGFSVGEAKPMFGVGRRELGHGNLAKKALEATIDKDYNETVRLVSEILESNGSSSMATVCGGSLALKAAGIPISDLVAGVAMGMVVENDKYAILTDIMGLEDHDGDMDFKVAGTSKGITALQMDIKLGGIELSVLKEALLQAKEGRTHILSLMKDAEKDIVPSGALPLIEQFAIDPSKIMVVIGKAGATIKEIIEKFTVSIDLDKENGTVKVSGGNKQNIIDACEHIKTISNNAPSKKDASKNIDFEKLYSEDEVVIGKVERLADFGAFILLPKGGEGLLHISKISKDRVKNVADVLSIGQELEVKVLKVKKDRIELSSAN.

Mg(2+) contacts are provided by Asp-506 and Asp-512. One can recognise a KH domain in the interval 571 to 631 (PLIEQFAIDP…QNIIDACEHI (61 aa)). The region spanning 657–724 (DEVVIGKVER…KKDRIELSSA (68 aa)) is the S1 motif domain.

The protein belongs to the polyribonucleotide nucleotidyltransferase family. Mg(2+) is required as a cofactor.

Its subcellular location is the cytoplasm. The enzyme catalyses RNA(n+1) + phosphate = RNA(n) + a ribonucleoside 5'-diphosphate. Functionally, involved in mRNA degradation. Catalyzes the phosphorolysis of single-stranded polyribonucleotides processively in the 3'- to 5'-direction. The chain is Polyribonucleotide nucleotidyltransferase from Aliarcobacter butzleri (strain RM4018) (Arcobacter butzleri).